The primary structure comprises 1922 residues: Endoribonuclease Dicer (1922 aa).

Residues 51-227 (LLEAALDHNT…ELEEKIQKLE (177 aa)) form the Helicase ATP-binding domain. 64 to 71 (LNTGSGKT) serves as a coordination point for ATP. Residues 175–178 (DECH) carry the DECH box motif. Positions 256–595 (DCGPFTDRSG…LRNKCSKSVD (340 aa)) are required for interaction with PRKRA and TARBP2. The segment at 409–433 (YVSWSDSEDDDEDEEIEEKEKPETN) is disordered. Phosphoserine is present on residues Ser-413 and Ser-415. Positions 414-425 (DSEDDDEDEEIE) are enriched in acidic residues. The 170-residue stretch at 433–602 (NFPSPFTNIL…SVDTGETDID (170 aa)) folds into the Helicase C-terminal domain. The region spanning 630-722 (AIGHINRYCA…MPVGKETVKY (93 aa)) is the Dicer dsRNA-binding fold domain. Residues 895–1042 (KFMEDIEKSE…LVPELCAIHP (148 aa)) form the PAZ domain. Ser-1016 and Ser-1160 each carry phosphoserine. Residues 1276-1403 (DSEQSPSIGY…TDKWEKDEMT (128 aa)) enclose the RNase III 1 domain. Mg(2+) contacts are provided by Glu-1316, Asp-1395, and Glu-1398. Ser-1460, Ser-1468, and Ser-1470 each carry phosphoserine. Residues 1666–1824 (FENFEKKINY…LAGAIYMDSG (159 aa)) form the RNase III 2 domain. Glu-1705, Asp-1810, and Glu-1813 together coordinate Mg(2+). One can recognise a DRBM domain in the interval 1849 to 1914 (VPRSPVRELL…ARRALRSLKA (66 aa)). Ser-1868 is subject to Phosphoserine.

Belongs to the helicase family. Dicer subfamily. Component of the RISC loading complex (RLC), or micro-RNA (miRNA) loading complex (miRLC), which is composed of DICER1, AGO2 and TARBP2; DICER1 and TARBP2 are required to process precursor miRNAs (pre-miRNAs) to mature miRNAs and then load them onto AGO2. Note that the trimeric RLC/miRLC is also referred to as RISC. Interacts with DHX9, AGO1, PIWIL1 and PRKRA. Associates with the 60S ribosome. Interacts with BCDIN3D. Interacts with AGO2, TARBP2, EIF6, MOV10 and RPL7A (60S ribosome subunit); they form a large RNA-induced silencing complex (RISC). Interacts (via Dicer dsRNA-binding fold domain) with ALOX5 (via PLAT domain); this interaction enhances arachidonate 5-lipoxygenase activity and modifies the miRNA precursor processing activity of DICER1. In terms of assembly, (Microbial infection) Interacts with ebolavirus transcriptional activator VP30; this interaction prevents TARBP2/TRBP binding to DICER1 and thus allows the virus to counteract host RNA silencing. As to quaternary structure, (Microbial infection) Interacts with ebolavirus transcriptional activator VP35; this interaction prevents TARBP2/TRBP binding to DICER1 and thus allows the virus to counteract host RNA silencing. Mg(2+) is required as a cofactor. Mn(2+) serves as cofactor.

It localises to the cytoplasm. It is found in the perinuclear region. The enzyme catalyses Endonucleolytic cleavage to 5'-phosphomonoester.. Its function is as follows. Double-stranded RNA (dsRNA) endoribonuclease playing a central role in short dsRNA-mediated post-transcriptional gene silencing. Cleaves naturally occurring long dsRNAs and short hairpin pre-microRNAs (miRNA) into fragments of twenty-one to twenty-three nucleotides with 3' overhang of two nucleotides, producing respectively short interfering RNAs (siRNA) and mature microRNAs. SiRNAs and miRNAs serve as guide to direct the RNA-induced silencing complex (RISC) to complementary RNAs to degrade them or prevent their translation. Gene silencing mediated by siRNAs, also called RNA interference, controls the elimination of transcripts from mobile and repetitive DNA elements of the genome but also the degradation of exogenous RNA of viral origin for instance. The miRNA pathway on the other side is a mean to specifically regulate the expression of target genes. This is Endoribonuclease Dicer (DICER1) from Homo sapiens (Human).